A 544-amino-acid chain; its full sequence is MGDCVAPKEDLIFRSKLPDIYIPKHLPLHTYCFENISKVGDKSCLINGATGETFTYSQVELLSRKVASGLNKLGIQQGDTIMLLLPNSPEYFFAFLGASYRGAISTMANPFFTSAEVIKQLKASLAKLIITQACYVDKVKDYAAEKNIQIICIDDAPQDCLHFSKLMEADESEMPEVVIDSDDVVALPYSSGTTGLPKGVMLTHKGLVTSVAQQVDGDNPNLYMHSEDVMICILPLFHIYSLNAVLCCGLRAGVTILIMQKFDIVPFLELIQKYKVTIGPFVPPIVLAIAKSPVVDKYDLSSVRTVMSGAAPLGKELEDAVRAKFPNAKLGQGYGMTEAGPVLAMCLAFAKEPYEIKSGACGTVVRNAEMKIVDPETNASLPRNQRGEICIRGDQIMKGYLNDPESTRTTIDEEGWLHTGDIGFIDDDDELFIVDRLKEIIKYKGFQVAPAELEALLLTHPTISDAAVVPMIDEKAGEVPVAFVVRTNGFTTTEEEIKQFVSKQVVFYKRIFRVFFVDAIPKSPSGKILRKDLRAKIASGDLPK.

The ATP site is built by S190, S191, G192, T193, T194, and K198. Y240 contacts (E)-4-coumaroyl-AMP. K261 serves as a coordination point for CoA. Residues 263 to 332 (DIVPFLELIQ…AKFPNAKLGQ (70 aa)) are SBD1. Positions 310, 332, 333, 337, and 345 each coordinate (E)-4-coumaroyl-AMP. ATP-binding residues include Q332, G333, and T337. Residues 333–400 (GYGMTEAGPV…IRGDQIMKGY (68 aa)) are SBD2. ATP is bound by residues D421 and R436. Residues K438 and K442 each contribute to the (E)-4-coumaroyl-AMP site. CoA is bound by residues K444 and G445. K527 serves as a coordination point for ATP.

Belongs to the ATP-dependent AMP-binding enzyme family. The cofactor is Mg(2+).

It catalyses the reaction (E)-4-coumarate + ATP + CoA = (E)-4-coumaroyl-CoA + AMP + diphosphate. The enzyme catalyses (E)-4-coumarate + ATP + H(+) = (E)-4-coumaroyl-AMP + diphosphate. The catalysed reaction is (E)-4-coumaroyl-AMP + CoA = (E)-4-coumaroyl-CoA + AMP + H(+). Its pathway is phytoalexin biosynthesis; 3,4',5-trihydroxystilbene biosynthesis; 3,4',5-trihydroxystilbene from trans-4-coumarate: step 1/2. Its function is as follows. Carboxylate--CoA ligase that may use 4-coumarate as substrate. Follows a two-step reaction mechanism, wherein the carboxylate substrate first undergoes adenylation by ATP, followed by a thioesterification in the presence of CoA to yield the final CoA thioester. The protein is 4-coumarate--CoA ligase 2 (4CL2) of Petroselinum crispum (Parsley).